Here is a 274-residue protein sequence, read N- to C-terminus: Protein bax (274 aa).

Polar residues predominate over residues 32-64 (TTASQKSHLTKASNKQVSSKQEYSRNSAKSSSL). The tract at residues 32 to 74 (TTASQKSHLTKASNKQVSSKQEYSRNSAKSSSLPDLRKYPSGT) is disordered. 247–254 (GYSTKGKS) provides a ligand contact to ATP.

In Escherichia coli (strain K12), this protein is Protein bax (bax).